The primary structure comprises 329 residues: Nicotianamine synthase 8 (329 aa).

Belongs to the nicotianamine synthase (NAS)-like family. Homotrimer.

It carries out the reaction 3 S-adenosyl-L-methionine = nicotianamine + 3 S-methyl-5'-thioadenosine + 3 H(+). Functionally, synthesizes nicotianamine, a polyamine that is the first intermediate in the synthesis of the phytosiderophores of the mugineic acid type found in gramineae which serve as a sensor for the physiological iron status within the plant, and/or might be involved in the transport of iron. The chain is Nicotianamine synthase 8 (NAS8) from Hordeum vulgare (Barley).